We begin with the raw amino-acid sequence, 226 residues long: Urease accessory protein UreF (226 aa).

Belongs to the UreF family. UreD, UreF and UreG form a complex that acts as a GTP-hydrolysis-dependent molecular chaperone, activating the urease apoprotein by helping to assemble the nickel containing metallocenter of UreC. The UreE protein probably delivers the nickel.

The protein localises to the cytoplasm. Its function is as follows. Required for maturation of urease via the functional incorporation of the urease nickel metallocenter. The sequence is that of Urease accessory protein UreF from Corynebacterium glutamicum (strain R).